Reading from the N-terminus, the 77-residue chain is UPF0401 protein ECP_3853 (77 aa).

This sequence belongs to the UPF0401 family.

The sequence is that of UPF0401 protein ECP_3853 from Escherichia coli O6:K15:H31 (strain 536 / UPEC).